We begin with the raw amino-acid sequence, 210 residues long: THAP domain-containing protein 1 (210 aa).

Residues 5–57 form a THAP-type zinc finger; that stretch reads CSAYGCKNRYDKDKPVSFHKFPLTRPSLCKQWEAAVKRKNFKPTKYSSICSEH. Positions 131-134 match the HCFC1-binding motif (HBM) motif; that stretch reads DHNY. Residues 137–187 adopt a coiled-coil conformation; sequence EDTMHQRKRILQLEQQVEKLRKKLKTAQQRCRRQERQLEKLKEVVHFQREK.

This sequence belongs to the THAP1 family. As to quaternary structure, interacts with PAWR. Component of a THAP1/THAP3-HCFC1-OGT complex that contains, either THAP1 or THAP3, HCFC1 and OGT. Interacts with OGT. Interacts (via the HBM) with HCFC1 (via the Kelch-repeat domain); the interaction recruits HCFC1 to the RRM1 promoter. Highest levels in heart, liver and kidney. Lower levels in brain and lung.

Its subcellular location is the nucleus. It localises to the nucleoplasm. It is found in the PML body. In terms of biological role, DNA-binding transcription regulator that regulates endothelial cell proliferation and G1/S cell-cycle progression. Specifically binds the 5'-[AT]NTNN[GT]GGCA[AGT]-3' core DNA sequence and acts by modulating expression of pRB-E2F cell-cycle target genes, including RRM1. Component of a THAP1/THAP3-HCFC1-OGT complex that is required for the regulation of the transcriptional activity of RRM1. May also have pro-apoptotic activity by potentiating both serum-withdrawal and TNF-induced apoptosis. The protein is THAP domain-containing protein 1 (Thap1) of Mus musculus (Mouse).